Reading from the N-terminus, the 321-residue chain is Opticin (321 aa).

Residues 1–19 (MKLLALLSLLILMLQEART) form the signal peptide. At Tyr-61 the chain carries Sulfotyrosine. Residues 105–142 (LLAAPANHGLPTCLICVCLGSSVYCDDADLENIPPLPQ) form the LRRNT domain. 6 LRR repeats span residues 143–164 (TTAYLYARFNRISHIRAGDFKG), 167–188 (KLKRIDLSGNSISSIDDKALRL), 191–212 (ALRDLILPENKLVALPTLPTSI), 237–258 (KLQFLYLADNLLDAIPPSLPLS), 259–279 (LRSLHLQNNMIETMQRDAFCD), and 289–309 (PLEDIRLDGNPINLSLFPSAY). An intrachain disulfide couples Cys-278 to Cys-311. N-linked (GlcNAc...) asparagine glycosylation occurs at Asn-301.

This sequence belongs to the small leucine-rich proteoglycan (SLRP) family. SLRP class III subfamily. As to quaternary structure, homodimer. Post-translationally, O-glycosylated (sialylated oligosaccharides). In terms of processing, sulfated on tyrosine residues. Proteolytically cleaved by MMP1, MMP2, MMP3, MMP7, MMP8, MMP9, ADAMTS4, and ADAMTS5. Proteolytically cleaved by MMP13.

Its subcellular location is the secreted. It is found in the extracellular space. The protein resides in the extracellular matrix. Inhibits angiogenesis in the vitreous humor of the eye, and therefore represses neovascularization. Binds collagen fibrils. May be involved in collagen fiber organization via regulation of other members of the small leucine-rich repeat proteoglycan superfamily. This chain is Opticin (OPTC), found in Bos taurus (Bovine).